The sequence spans 235 residues: MSARFGVVVFPGSNCDHDAYHAAHDVFDQEARFIWHEEASLGDVDVVIVPGGFSYGDYLRSGAVARFSPIMQDVVRFAEDGGLVFGICNGFQVLCEAGLLPGTLMRNESLRFVCKDTPLRVENAGTPFTNALTEGQVITIPVSHGEGRYYADEDVLARIEANDQVLLRYSTADGAVTDEANPNGSVHGIAGLVNEAGNVCGLMPHPERCVESLLGGDDGRLIFESLLNHVSIVAA.

One can recognise a Glutamine amidotransferase type-1 domain in the interval 5-235 (FGVVVFPGSN…LLNHVSIVAA (231 aa)). Cys88 serves as the catalytic Nucleophile. Active-site residues include His205 and Glu207.

As to quaternary structure, part of the FGAM synthase complex composed of 1 PurL, 1 PurQ and 2 PurS subunits.

The protein localises to the cytoplasm. It carries out the reaction N(2)-formyl-N(1)-(5-phospho-beta-D-ribosyl)glycinamide + L-glutamine + ATP + H2O = 2-formamido-N(1)-(5-O-phospho-beta-D-ribosyl)acetamidine + L-glutamate + ADP + phosphate + H(+). The enzyme catalyses L-glutamine + H2O = L-glutamate + NH4(+). Its pathway is purine metabolism; IMP biosynthesis via de novo pathway; 5-amino-1-(5-phospho-D-ribosyl)imidazole from N(2)-formyl-N(1)-(5-phospho-D-ribosyl)glycinamide: step 1/2. Functionally, part of the phosphoribosylformylglycinamidine synthase complex involved in the purines biosynthetic pathway. Catalyzes the ATP-dependent conversion of formylglycinamide ribonucleotide (FGAR) and glutamine to yield formylglycinamidine ribonucleotide (FGAM) and glutamate. The FGAM synthase complex is composed of three subunits. PurQ produces an ammonia molecule by converting glutamine to glutamate. PurL transfers the ammonia molecule to FGAR to form FGAM in an ATP-dependent manner. PurS interacts with PurQ and PurL and is thought to assist in the transfer of the ammonia molecule from PurQ to PurL. The sequence is that of Phosphoribosylformylglycinamidine synthase subunit PurQ from Salinibacter ruber (strain DSM 13855 / M31).